We begin with the raw amino-acid sequence, 502 residues long: D-erythritol 1-phosphate dehydrogenase (502 aa).

Residue 8-36 (DLFVIGGGINGAGVARDAAGRGLKVVLAE) participates in FAD binding.

It belongs to the FAD-dependent glycerol-3-phosphate dehydrogenase family. It depends on FAD as a cofactor.

It catalyses the reaction D-erythritol 1-phosphate + NADP(+) = D-erythrulose 1-phosphate + NADPH + H(+). It participates in carbohydrate metabolism; erythritol degradation. Its function is as follows. Catalyzes the oxydation of D-erythritol 1-phosphate to D-erythrulose 1-phosphate. This chain is D-erythritol 1-phosphate dehydrogenase, found in Brucella abortus (strain 2308).